The following is a 474-amino-acid chain: 6-phospho-beta-glucosidase AscB (474 aa).

The Proton donor role is filled by Glu180. Glu372 serves as the catalytic Nucleophile.

This sequence belongs to the glycosyl hydrolase 1 family.

It carries out the reaction 6-phospho-beta-D-glucosyl-(1-&gt;4)-D-glucose + H2O = D-glucose 6-phosphate + D-glucose. Its function is as follows. Can hydrolyze salicin, cellobiose, and probably arbutin. In Escherichia coli (strain K12), this protein is 6-phospho-beta-glucosidase AscB (ascB).